Consider the following 206-residue polypeptide: LexA repressor (206 aa).

The segment at residues 28-48 (RAEIARELGFRSANAAEEHLK) is a DNA-binding region (H-T-H motif). Catalysis depends on for autocatalytic cleavage activity residues Ser123 and Lys160.

This sequence belongs to the peptidase S24 family. In terms of assembly, homodimer.

It carries out the reaction Hydrolysis of Ala-|-Gly bond in repressor LexA.. Functionally, represses a number of genes involved in the response to DNA damage (SOS response), including recA and lexA. In the presence of single-stranded DNA, RecA interacts with LexA causing an autocatalytic cleavage which disrupts the DNA-binding part of LexA, leading to derepression of the SOS regulon and eventually DNA repair. This is LexA repressor from Vibrio campbellii (strain ATCC BAA-1116).